The following is a 137-amino-acid chain: MVAFYGIFLFGTVYLFGLAKLFYQYVSNKLVSTVHIVTDSSNELVESTEPTEIIEVDDVEIIQPIEFSEHIESSEPIESTEPISLSEREKIAEIRMKKFSQRSKISNIINKKRVQTQFSNTDYSDRHRDQVLRDWMN.

The first 19 residues, 1–19 (MVAFYGIFLFGTVYLFGLA), serve as a signal peptide directing secretion.

This is an uncharacterized protein from Acanthamoeba polyphaga (Amoeba).